The sequence spans 176 residues: Prenylated Rab acceptor 1 (176 aa).

Methionine 1 is subject to N-acetylmethionine. The SKL peroxisome targeting motif signature appears at serine 11–phenylalanine 13. Serine 18 bears the Phosphoserine mark. 2 helical membrane-spanning segments follow: residues leucine 84–isoleucine 104 and valine 129–isoleucine 149.

It belongs to the PRA1 family. Interacts with YIP1 and the Rab GTPases SEC4, YPT1, YPT6, YPT10, YPT11, YPT31, YPT32 and YPT52.

It is found in the golgi apparatus membrane. The protein localises to the peroxisome membrane. The polypeptide is Prenylated Rab acceptor 1 (YIP3) (Saccharomyces cerevisiae (strain ATCC 204508 / S288c) (Baker's yeast)).